Consider the following 271-residue polypeptide: Acetyl-coenzyme A carboxylase carboxyl transferase subunit alpha (271 aa).

The 247-residue stretch at 1 to 247 (MSRELIRTVD…KKTILEALGE (247 aa)) folds into the CoA carboxyltransferase C-terminal domain.

This sequence belongs to the AccA family. Acetyl-CoA carboxylase is a heterohexamer composed of biotin carboxyl carrier protein (AccB), biotin carboxylase (AccC) and two subunits each of ACCase subunit alpha (AccA) and ACCase subunit beta (AccD).

It is found in the cytoplasm. The enzyme catalyses N(6)-carboxybiotinyl-L-lysyl-[protein] + acetyl-CoA = N(6)-biotinyl-L-lysyl-[protein] + malonyl-CoA. The protein operates within lipid metabolism; malonyl-CoA biosynthesis; malonyl-CoA from acetyl-CoA: step 1/1. In terms of biological role, component of the acetyl coenzyme A carboxylase (ACC) complex. First, biotin carboxylase catalyzes the carboxylation of biotin on its carrier protein (BCCP) and then the CO(2) group is transferred by the carboxyltransferase to acetyl-CoA to form malonyl-CoA. This chain is Acetyl-coenzyme A carboxylase carboxyl transferase subunit alpha, found in Clostridium perfringens (strain SM101 / Type A).